A 492-amino-acid polypeptide reads, in one-letter code: MSTPTNPEQPTDHPSAPFTLEARFAEEFPEMTTPWRGEDQPDPELAVLNEDLARLLGIDPDWLRSPAGVEFLLGLNPEPTTEMVAQGYAGHQFGQFVPSLGDGRALLLGEIRGTDGVLRDIHLKGSGRTRYSRGADGRAALGPALREYLVSEAMHALGVPTTRALAVVTTGRKIQRDRVLPGAVVVRVATSHIRVGSFQYANITGGIDLSRRLADHAITRHYPRLVERFPESGPERYAWFFRQVMDAQAQTVARWMRLGFVHGVLNTDNTLVSGETIDYGPCAFMDRYREDAVFSSIDTHGRYKFSNQPLILGWNLARLAETLIPLFGDTPDAGVDRAQEMINTFTDRYNDALHAELAAGLGLDADAPDTAGLIESYLELMRTHSPDVTTLNRTLSEWSVESTPPAGFEEWIPRWLAAQPDLINMQKTNPVYVPRNHLVEDALAEAVEGRWEAFTTLLGLVTDPFTRQAGMEVYERPGPDGFEDTYMTFCGT.

G101, G103, R104, K124, D136, G137, R187, and R194 together coordinate ATP. D268 (proton acceptor) is an active-site residue. Residues N269 and D278 each contribute to the Mg(2+) site. D278 provides a ligand contact to ATP.

Belongs to the SELO family. It depends on Mg(2+) as a cofactor. Mn(2+) serves as cofactor.

The enzyme catalyses L-seryl-[protein] + ATP = 3-O-(5'-adenylyl)-L-seryl-[protein] + diphosphate. The catalysed reaction is L-threonyl-[protein] + ATP = 3-O-(5'-adenylyl)-L-threonyl-[protein] + diphosphate. It carries out the reaction L-tyrosyl-[protein] + ATP = O-(5'-adenylyl)-L-tyrosyl-[protein] + diphosphate. It catalyses the reaction L-histidyl-[protein] + UTP = N(tele)-(5'-uridylyl)-L-histidyl-[protein] + diphosphate. The enzyme catalyses L-seryl-[protein] + UTP = O-(5'-uridylyl)-L-seryl-[protein] + diphosphate. The catalysed reaction is L-tyrosyl-[protein] + UTP = O-(5'-uridylyl)-L-tyrosyl-[protein] + diphosphate. Its function is as follows. Nucleotidyltransferase involved in the post-translational modification of proteins. It can catalyze the addition of adenosine monophosphate (AMP) or uridine monophosphate (UMP) to a protein, resulting in modifications known as AMPylation and UMPylation. This chain is Protein nucleotidyltransferase YdiU, found in Corynebacterium efficiens (strain DSM 44549 / YS-314 / AJ 12310 / JCM 11189 / NBRC 100395).